The following is an 81-amino-acid chain: RNA-binding protein Hfq (81 aa).

One can recognise a Sm domain in the interval 9–68 (DPFLNVLRRERVPVFIYLINGIKLQGEIESFDKFVILLRNTVNQMIYKHAISTIVPSRVV).

Belongs to the Hfq family. As to quaternary structure, homohexamer.

In terms of biological role, RNA chaperone that binds small regulatory RNA (sRNAs) and mRNAs to facilitate mRNA translational regulation in response to envelope stress, environmental stress and changes in metabolite concentrations. Also binds with high specificity to tRNAs. This chain is RNA-binding protein Hfq, found in Blochmanniella pennsylvanica (strain BPEN).